The primary structure comprises 48 residues: Light-harvesting polypeptide B-885 beta-1 chain (48 aa).

At 1–20 (AEDRKSLSGLTEQEAQEFGT) the chain is on the cytoplasmic side. The chain crosses the membrane as a helical span at residues 21–43 (LYTQGVAFVAVIAVVAHALVWAW). Residue H37 coordinates a bacteriochlorophyll. The Periplasmic portion of the chain corresponds to 44 to 48 (RPWLQ).

It belongs to the antenna complex beta subunit family. In terms of assembly, the core complex is formed by different alpha and beta chains, binding bacteriochlorophyll molecules, and arranged most probably in tetrameric structures disposed around the reaction center. The non-pigmented gamma chains may constitute additional components.

Its subcellular location is the cell inner membrane. Its function is as follows. Antenna complexes are light-harvesting systems, which transfer the excitation energy to the reaction centers. The polypeptide is Light-harvesting polypeptide B-885 beta-1 chain (Rhodocyclus tenuis (Rhodospirillum tenue)).